We begin with the raw amino-acid sequence, 892 residues long: Isoleucine--tRNA ligase (892 aa).

Residues P60–H70 carry the 'HIGH' region motif. E552 lines the L-isoleucyl-5'-AMP pocket. Residues K593–S597 carry the 'KMSKS' region motif. Residue K596 participates in ATP binding. Positions 862, 865, 879, and 882 each coordinate Zn(2+).

Belongs to the class-I aminoacyl-tRNA synthetase family. IleS type 1 subfamily. As to quaternary structure, monomer. It depends on Zn(2+) as a cofactor.

It localises to the cytoplasm. It carries out the reaction tRNA(Ile) + L-isoleucine + ATP = L-isoleucyl-tRNA(Ile) + AMP + diphosphate. Its function is as follows. Catalyzes the attachment of isoleucine to tRNA(Ile). As IleRS can inadvertently accommodate and process structurally similar amino acids such as valine, to avoid such errors it has two additional distinct tRNA(Ile)-dependent editing activities. One activity is designated as 'pretransfer' editing and involves the hydrolysis of activated Val-AMP. The other activity is designated 'posttransfer' editing and involves deacylation of mischarged Val-tRNA(Ile). This Mycoplasmopsis agalactiae (strain NCTC 10123 / CIP 59.7 / PG2) (Mycoplasma agalactiae) protein is Isoleucine--tRNA ligase.